The sequence spans 435 residues: Xylose isomerase (435 aa).

Residues His100 and Asp103 contribute to the active site. Mg(2+)-binding residues include Glu231, Glu267, His270, Asp295, Asp306, Asp308, and Asp338.

Belongs to the xylose isomerase family. As to quaternary structure, homotetramer. The cofactor is Mg(2+).

It is found in the cytoplasm. It carries out the reaction alpha-D-xylose = alpha-D-xylulofuranose. The chain is Xylose isomerase from Brucella anthropi (strain ATCC 49188 / DSM 6882 / CCUG 24695 / JCM 21032 / LMG 3331 / NBRC 15819 / NCTC 12168 / Alc 37) (Ochrobactrum anthropi).